The following is a 123-amino-acid chain: uncharacterized protein (123 aa).

Residues 35 to 100 (SQDHGDDPAE…SSGAPASQHC (66 aa)) form a disordered region. Basic and acidic residues predominate over residues 37–48 (DHGDDPAERGRT). Over residues 85–97 (ALPASPSSGAPAS) the composition is skewed to low complexity.

This is an uncharacterized protein from Homo sapiens (Human).